The primary structure comprises 594 residues: Aspartate--tRNA(Asp/Asn) ligase (594 aa).

Glu175 contributes to the L-aspartate binding site. An aspartate region spans residues 199–202; sequence QQLK. Residue Arg221 coordinates L-aspartate. ATP-binding positions include 221–223 and Gln230; that span reads RDE. His450 contacts L-aspartate. Glu485 provides a ligand contact to ATP. Arg492 serves as a coordination point for L-aspartate. ATP is bound at residue 537 to 540; sequence GIDR.

The protein belongs to the class-II aminoacyl-tRNA synthetase family. Type 1 subfamily. In terms of assembly, homodimer.

The protein localises to the cytoplasm. The enzyme catalyses tRNA(Asx) + L-aspartate + ATP = L-aspartyl-tRNA(Asx) + AMP + diphosphate. In terms of biological role, aspartyl-tRNA synthetase with relaxed tRNA specificity since it is able to aspartylate not only its cognate tRNA(Asp) but also tRNA(Asn). Reaction proceeds in two steps: L-aspartate is first activated by ATP to form Asp-AMP and then transferred to the acceptor end of tRNA(Asp/Asn). The chain is Aspartate--tRNA(Asp/Asn) ligase from Herpetosiphon aurantiacus (strain ATCC 23779 / DSM 785 / 114-95).